A 378-amino-acid polypeptide reads, in one-letter code: MATVTFDKATRVYPGSTKPAVDGLDIDIADGEFLVLVGPSGCGKSTSLRMLAGLEDVNGGAIRIGDRDVTHLPPKDRDIAMVFQNYALYPHMSVADNMGFALKIAGVNKAEIRQKVEEAAKILDLTEYLDRKPKALSGGQRQRVAMGRAIVREPQVFLMDEPLSNLDAKLRVSTRTQIASLQRRLGITTVYVTHDQVEAMTMGDRVAVLKDGLLQQVDSPRNMYDKPANLFVAGFIGSPAMNLVEVPITDGGVKFGNSVVPVNRDALKAASDKGDRTVTVGVRPEHFDVVELNGGAAKTLSKDSADAPAGLAVSVNVVEETGADGYIYGTVEVGGETKDLVVRVSSRAVPEKGATVHVVPRPGEIHVFSSSTGERLTD.

Residues 4–236 (VTFDKATRVY…PANLFVAGFI (233 aa)) enclose the ABC transporter domain. 38–45 (GPSGCGKS) contributes to the ATP binding site.

This sequence belongs to the ABC transporter superfamily. The DasABC-MsiK complex is composed of two ATP-binding proteins (MsiK), two transmembrane proteins (DasB and DasC) and a solute-binding protein (DasA). The NgcEFG-MsiK complex is composed of two ATP-binding proteins (MsiK), two transmembrane proteins (NgcF and NgcG) and a solute-binding protein (NgcE).

Its subcellular location is the cell membrane. Functionally, part of the ABC transporter complexes DasABC-MsiK and NgcEFG-MsiK involved in N,N'-diacetylchitobiose ((GlcNAc)2) uptake. Responsible for energy coupling to the transport system. This Streptomyces coelicolor (strain ATCC BAA-471 / A3(2) / M145) protein is Diacetylchitobiose uptake system ATP-binding protein MsiK.